Here is a 99-residue protein sequence, read N- to C-terminus: DNA-directed RNA polymerase subunit omega (99 aa).

This sequence belongs to the RNA polymerase subunit omega family. In terms of assembly, the RNAP catalytic core consists of 2 alpha, 1 beta, 1 beta' and 1 omega subunit. When a sigma factor is associated with the core the holoenzyme is formed, which can initiate transcription.

The catalysed reaction is RNA(n) + a ribonucleoside 5'-triphosphate = RNA(n+1) + diphosphate. In terms of biological role, promotes RNA polymerase assembly. Latches the N- and C-terminal regions of the beta' subunit thereby facilitating its interaction with the beta and alpha subunits. The sequence is that of DNA-directed RNA polymerase subunit omega from Deinococcus deserti (strain DSM 17065 / CIP 109153 / LMG 22923 / VCD115).